Here is a 563-residue protein sequence, read N- to C-terminus: MSEITLGKYLFERLKQVNVNTIFGLPGDFNLSLLDKIYEVDGLRWAGNANELNAAYAADGYARIKGLSVLVTTFGVGELSALNGIAGSYAEHVGVLHVVGVPSISAQAKQLLLHHTLGNGDFTVFHRMSANISETTSMITDIATAPSEIDRLIRTTFITQRPSYLGLPANLVDLKVPGSLLEKPIDLSLKPNDPEAEKEVIDTVLELIQNSKNPVILSDACASRHNVKKETQKLIDLTQFPAFVTPLGKGSIDEQHPRYGGVYVGTLSKQDVKQAVESADLILSVGALLSDFNTGSFSYSYKTKNVVEFHSDYVKVKNATFLGVQMKFALQNLLKVIPDVVKGYKSVPVPTKTPANKGVPASTPLKQEWLWNELSKFLQEGDVIISETGTSAFGINQTIFPKDAYGISQVLWGSIGFTTGATLGAAFAAEEIDPNKRVILFIGDGSLQLTVQEISTMIRWGLKPYLFVLNNDGYTIEKLIHGPHAEYNEIQTWDHLALLPAFGAKKYENHKIATTGEWDALTTDSEFQKNSVIRLIELKLPVFDAPESLIKQAQLTAATNAKQ.

S2 bears the N-acetylserine mark. Positions 28 and 115 each coordinate pyruvate. K212 is covalently cross-linked (Glycyl lysine isopeptide (Lys-Gly) (interchain with G-Cter in ubiquitin)). Position 223 is a phosphoserine (S223). Residue K233 forms a Glycyl lysine isopeptide (Lys-Gly) (interchain with G-Cter in ubiquitin) linkage. T266 bears the Phosphothreonine mark. K269 is covalently cross-linked (Glycyl lysine isopeptide (Lys-Gly) (interchain with G-Cter in ubiquitin)). The residue at position 353 (T353) is a Phosphothreonine. Residues T390 and 413-415 (GSI) contribute to the thiamine diphosphate site. Residue D444 coordinates Mg(2+). Thiamine diphosphate-binding positions include 445 to 446 (GS) and 471 to 476 (NDGYTI). Residues N471 and G473 each contribute to the Mg(2+) site. Position 477 (E477) interacts with pyruvate. A Glycyl lysine isopeptide (Lys-Gly) (interchain with G-Cter in ubiquitin) cross-link involves residue K505. Residue T522 is modified to Phosphothreonine.

The protein belongs to the TPP enzyme family. As to quaternary structure, homotetramer. Requires Mg(2+) as cofactor. It depends on thiamine diphosphate as a cofactor.

It localises to the cytoplasm. It catalyses the reaction pyruvate + H(+) = acetaldehyde + CO2. The enzyme catalyses 3-methyl-2-oxobutanoate + H(+) = 2-methylpropanal + CO2. The catalysed reaction is (S)-3-methyl-2-oxopentanoate + H(+) = 2-methylbutanal + CO2. It carries out the reaction indole-3-pyruvate + H(+) = indole-3-acetaldehyde + CO2. It catalyses the reaction 3-phenylpyruvate + H(+) = 2-phenylacetaldehyde + CO2. The enzyme catalyses 2-oxobutanoate + H(+) = propanal + CO2. The catalysed reaction is 2-oxopentanoate + H(+) = butanal + CO2. It carries out the reaction 2 acetaldehyde = acetoin. It catalyses the reaction acetaldehyde + pyruvate + H(+) = acetoin + CO2. It functions in the pathway fermentation; ethanol fermentation. Its pathway is amino-acid degradation; Ehrlich pathway. Functionally, minor of three pyruvate decarboxylases (PDC1, PDC5, PDC6) implicated in the nonoxidative conversion of pyruvate to acetaldehyde and carbon dioxide during alcoholic fermentation. Most of the produced acetaldehyde is subsequently reduced to ethanol, but some is required for cytosolic acetyl-CoA production for biosynthetic pathways. The enzyme is also one of five 2-oxo acid decarboxylases (PDC1, PDC5, PDC6, ARO10, and THI3) able to decarboxylate more complex 2-oxo acids (alpha-keto-acids) than pyruvate, which seem mainly involved in amino acid catabolism. Here the enzyme catalyzes the decarboxylation of amino acids, which, in a first step, have been transaminated to the corresponding 2-oxo acids. In a third step, the resulting aldehydes are reduced to alcohols, collectively referred to as fusel oils or alcohols. Its preferred substrates are the transaminated amino acids derived from threonine (2-oxobutanoate), norvaline (2-oxopentanoate), valine (3-methyl-2-oxobutanoate, also alpha-keto-isovalerate), isoleucine ((3S)-3-methyl-2-oxopentanoate, also alpha-keto-beta-methylvalerate), phenylalanine (phenylpyruvate), and tryptophan (3-(indol-3-yl)pyruvate), whereas transaminated leucine is no substrate. In a side-reaction the carbanionic intermediate (or active aldehyde) generated by decarboxylation or by activation of an aldehyde can react with an aldehyde via condensation (or carboligation) yielding a 2-hydroxy ketone, collectively called acyloins. The expression level of this protein in the presence of fermentable carbon sources is so low that it cannot compensate for the other two pyruvate decarboxylases to sustain fermentation. This Saccharomyces cerevisiae (strain ATCC 204508 / S288c) (Baker's yeast) protein is Pyruvate decarboxylase isozyme 3 (PDC6).